The sequence spans 378 residues: MATAVASQVAVSAPAGSDRGLRSSGIQGSNNISFSNKSWVGTTLAWESKATRPRHANKVLCMSVQQASESKVAVKPLDLESANEPPLNTYKPKEPYTATIVSVERIVGPKAPGETCHIVIDHGGNVPYWEGQSYGIIPPGENPKKPGAPHNVRLYSIASTRYGDSFDGRTTSLCVRRAVYYDPETGKEDPSKNGVCSNFLCNSKPGDKVKVTGPSGKIMLLPEEDPNATHIMIATGTGVAPFRGYLRRMFMEDVPKYRFGGLAWLFLGVANTDSLLYDEEFTSYLKQYPDNFRYDKALSREQKNKNAGKMYVQDKIEEYSDEIFKLLDGGAHIYFCGLKGMMPGIQDTLKKVAEQRGESWEQKLSQLKKNKQWHVEVY.

Positions 1–17 are enriched in low complexity; sequence MATAVASQVAVSAPAGS. The tract at residues 1–27 is disordered; the sequence is MATAVASQVAVSAPAGSDRGLRSSGIQ. Residues 1–62 constitute a chloroplast transit peptide; that stretch reads MATAVASQVA…PRHANKVLCM (62 aa). An FAD-binding FR-type domain is found at 93 to 221; sequence KEPYTATIVS…TGPSGKIMLL (129 aa). FAD is bound by residues 153-156, 174-176, Tyr-180, 195-197, and Thr-237; these read RLYS, CVR, and VCS. Positions 156 and 176 each coordinate NADP(+). Residues Thr-237, 269–270, 299–300, Lys-309, 337–338, and Glu-376 each bind NADP(+); these read VA, SR, and GL.

This sequence belongs to the ferredoxin--NADP reductase type 1 family. FAD serves as cofactor.

It localises to the plastid. Its subcellular location is the chloroplast. The catalysed reaction is 2 reduced [2Fe-2S]-[ferredoxin] + NADP(+) + H(+) = 2 oxidized [2Fe-2S]-[ferredoxin] + NADPH. It participates in energy metabolism; photosynthesis. May play a key role in regulating the relative amounts of cyclic and non-cyclic electron flow to meet the demands of the plant for ATP and reducing power. Is involved in nitrate assimilation. The polypeptide is Ferredoxin--NADP reductase, root isozyme, chloroplastic (Oryza sativa subsp. japonica (Rice)).